A 254-amino-acid polypeptide reads, in one-letter code: Triosephosphate isomerase (254 aa).

Residue 10 to 12 coordinates substrate; the sequence is NWK. His99 (electrophile) is an active-site residue. The active-site Proton acceptor is the Glu169. Residues Gly175, Ser215, and 236–237 each bind substrate; that span reads GG.

This sequence belongs to the triosephosphate isomerase family. As to quaternary structure, homodimer.

Its subcellular location is the cytoplasm. It carries out the reaction D-glyceraldehyde 3-phosphate = dihydroxyacetone phosphate. It functions in the pathway carbohydrate biosynthesis; gluconeogenesis. The protein operates within carbohydrate degradation; glycolysis; D-glyceraldehyde 3-phosphate from glycerone phosphate: step 1/1. In terms of biological role, involved in the gluconeogenesis. Catalyzes stereospecifically the conversion of dihydroxyacetone phosphate (DHAP) to D-glyceraldehyde-3-phosphate (G3P). This Chlamydia felis (strain Fe/C-56) (Chlamydophila felis) protein is Triosephosphate isomerase.